Reading from the N-terminus, the 384-residue chain is S-adenosylmethionine synthase (384 aa).

His15 serves as a coordination point for ATP. A Mg(2+)-binding site is contributed by Asp17. Glu43 lines the K(+) pocket. Positions 56 and 99 each coordinate L-methionine. Positions 99-109 (QSPDINQGVDR) are flexible loop. ATP contacts are provided by residues 164-166 (DAK), 230-231 (RF), Asp239, 245-246 (RK), Ala262, and Lys266. An L-methionine-binding site is contributed by Asp239. Lys270 contributes to the L-methionine binding site.

This sequence belongs to the AdoMet synthase family. In terms of assembly, homotetramer; dimer of dimers. The cofactor is Mg(2+). It depends on K(+) as a cofactor.

The protein localises to the cytoplasm. It catalyses the reaction L-methionine + ATP + H2O = S-adenosyl-L-methionine + phosphate + diphosphate. It functions in the pathway amino-acid biosynthesis; S-adenosyl-L-methionine biosynthesis; S-adenosyl-L-methionine from L-methionine: step 1/1. Its function is as follows. Catalyzes the formation of S-adenosylmethionine (AdoMet) from methionine and ATP. The overall synthetic reaction is composed of two sequential steps, AdoMet formation and the subsequent tripolyphosphate hydrolysis which occurs prior to release of AdoMet from the enzyme. The sequence is that of S-adenosylmethionine synthase from Photobacterium profundum (strain SS9).